Here is a 291-residue protein sequence, read N- to C-terminus: Beta-lactamase Toho-1 (291 aa).

Positions 1–29 (MMTQSIRRSMLTVMATLPLLFSSATLHAQ) are cleaved as a signal peptide. Ser73 acts as the Acyl-ester intermediate in catalysis. Residue 237–239 (KTG) coordinates substrate.

This sequence belongs to the class-A beta-lactamase family. In terms of assembly, monomer.

The enzyme catalyses a beta-lactam + H2O = a substituted beta-amino acid. Has strong cefotaxime-hydrolyzing activity. The chain is Beta-lactamase Toho-1 (bla) from Escherichia coli.